The following is a 422-amino-acid chain: WD repeat and SOCS box-containing protein 1 (422 aa).

WD repeat units follow at residues 124-165 (SRCV…LLLN), 168-208 (DHTE…NMMK), 212-251 (GHQNWVYCCAFSPDSSMLCSVGAGKAVFLWDMDKYTMIRK), 254-293 (GHYNDVVACEFSPDGALLATASYDTRVYVWDPHIGSILFE), and 309-346 (DNGRWVKSVSFSHDGVHIASLADDNLVRFWRIDKSYPV). In terms of domain architecture, SOCS box spans 374–422 (NAYFWSTPKYVSSLQHLCRMAIRRVMNTNEVKKLPIPQKIMEFLTYQTM).

In terms of assembly, component of a probable ECS E3 ubiquitin-protein ligase complex that contains the Elongin BC complex.

The protein operates within protein modification; protein ubiquitination. Its function is as follows. Probable substrate-recognition component of a SCF-like ECS (Elongin-Cullin-SOCS-box protein) E3 ubiquitin-protein ligase complex which mediates the ubiquitination and subsequent proteasomal degradation of target proteins. This chain is WD repeat and SOCS box-containing protein 1 (wsb1), found in Xenopus tropicalis (Western clawed frog).